We begin with the raw amino-acid sequence, 302 residues long: Putative S-adenosyl-L-methionine-dependent methyltransferase MMAR_1068 (302 aa).

S-adenosyl-L-methionine is bound by residues aspartate 127 and 156–157; that span reads DL.

Belongs to the UPF0677 family.

Its function is as follows. Exhibits S-adenosyl-L-methionine-dependent methyltransferase activity. The protein is Putative S-adenosyl-L-methionine-dependent methyltransferase MMAR_1068 of Mycobacterium marinum (strain ATCC BAA-535 / M).